Consider the following 107-residue polypeptide: Integration host factor subunit beta (107 aa).

Positions 55-107 (RRPARVGRNPKSGEKVQVPEKHVPHFKPGKELRERVDGRAGEPLKNDEPEDAQ) are disordered. Basic and acidic residues predominate over residues 65-101 (KSGEKVQVPEKHVPHFKPGKELRERVDGRAGEPLKND).

This sequence belongs to the bacterial histone-like protein family. In terms of assembly, heterodimer of an alpha and a beta chain.

Functionally, this protein is one of the two subunits of integration host factor, a specific DNA-binding protein that functions in genetic recombination as well as in transcriptional and translational control. The chain is Integration host factor subunit beta from Burkholderia pseudomallei (strain K96243).